A 394-amino-acid polypeptide reads, in one-letter code: Elongation factor Tu (394 aa).

Residues 10–204 (KEHANIGTIG…AVDTYIPTPE (195 aa)) enclose the tr-type G domain. The segment at 19-26 (GHVDHGKT) is G1. Residue 19–26 (GHVDHGKT) coordinates GTP. Thr-26 serves as a coordination point for Mg(2+). The segment at 60–64 (GITIN) is G2. The tract at residues 81–84 (DCPG) is G3. GTP-binding positions include 81-85 (DCPGH) and 136-139 (NKVD). A G4 region spans residues 136–139 (NKVD). The segment at 174–176 (SAL) is G5.

Belongs to the TRAFAC class translation factor GTPase superfamily. Classic translation factor GTPase family. EF-Tu/EF-1A subfamily. In terms of assembly, monomer.

It localises to the cytoplasm. It carries out the reaction GTP + H2O = GDP + phosphate + H(+). Functionally, GTP hydrolase that promotes the GTP-dependent binding of aminoacyl-tRNA to the A-site of ribosomes during protein biosynthesis. The sequence is that of Elongation factor Tu from Staphylococcus aureus (strain COL).